Reading from the N-terminus, the 73-residue chain is Homeodomain-only protein (73 aa).

A DNA-binding region (homeobox; degenerate) is located at residues 3 to 62 (TETASGPTEDQVEILEYNFNKVNKHPDPTTLCLIAAEAGLSEEETQKWFKQRLAQWRRSE).

In terms of assembly, interacts with serum response factor (SRF). Component of a large complex containing histone deacetylases such as HDAC2. Interacts with the acetylated forms of HSPA1A and HSPA1B. Interacts with HSPA8.

It localises to the nucleus. It is found in the cytoplasm. In terms of biological role, atypical homeodomain protein which does not bind DNA and is required to modulate cardiac growth and development. Acts via its interaction with SRF, thereby modulating the expression of SRF-dependent cardiac-specific genes and cardiac development. Prevents SRF-dependent transcription either by inhibiting SRF binding to DNA or by recruiting histone deacetylase (HDAC) proteins that prevent transcription by SRF. Overexpression causes cardiac hypertrophy. Acts as a co-chaperone for HSPA1A and HSPA1B chaperone proteins and assists in chaperone-mediated protein refolding. The sequence is that of Homeodomain-only protein (HOPX) from Bos taurus (Bovine).